The primary structure comprises 474 residues: Synaptotagmin-17 (474 aa).

The segment at 60–117 is disordered; that stretch reads WLMASRSNDKDGDSVHTASDVPLTPRTNSPDGRRSSSDTSKSTYSLTRRISSLDSRRP. Residues 96–117 show a composition bias toward low complexity; that stretch reads SDTSKSTYSLTRRISSLDSRRP. Ser-118 and Ser-119 each carry phosphoserine. 2 C2 domains span residues 184–310 and 321–455; these read QLGM…HWWK and ELGE…EQWH.

This sequence belongs to the synaptotagmin family. In terms of tissue distribution, expressed in brain and kidney.

The protein resides in the membrane. Functionally, plays a role in dendrite formation by melanocytes. In Rattus norvegicus (Rat), this protein is Synaptotagmin-17 (Syt17).